The primary structure comprises 594 residues: DNA ligase (594 aa).

E280 lines the ATP pocket. The active-site N6-AMP-lysine intermediate is the K282. R287, R316, E345, F385, R456, and K462 together coordinate ATP.

Belongs to the ATP-dependent DNA ligase family. Requires Mg(2+) as cofactor.

The enzyme catalyses ATP + (deoxyribonucleotide)n-3'-hydroxyl + 5'-phospho-(deoxyribonucleotide)m = (deoxyribonucleotide)n+m + AMP + diphosphate.. Functionally, DNA ligase that seals nicks in double-stranded DNA during DNA replication, DNA recombination and DNA repair. This chain is DNA ligase, found in Halorubrum lacusprofundi (strain ATCC 49239 / DSM 5036 / JCM 8891 / ACAM 34).